Reading from the N-terminus, the 670-residue chain is CLK4-associating serine/arginine rich protein (670 aa).

Residue Ser101 is modified to Phosphoserine. 2 disordered regions span residues Thr171–Asp232 and Glu258–His670. Acidic residues predominate over residues Pro182 to Asn214. The segment covering Arg265–Lys283 has biased composition (basic residues). Phosphoserine is present on residues Ser285 and Ser294. Over residues Ala290–Ser313 the composition is skewed to basic and acidic residues. Thr327 carries the post-translational modification Phosphothreonine. A phosphoserine mark is found at Ser331 and Ser335. A compositionally biased stretch (low complexity) spans Ala340–Lys355. Residues Pro356–Pro365 show a composition bias toward pro residues. The span at Ser378–Ser400 shows a compositional bias: low complexity. Basic residues-rich tracts occupy residues Ser411–Ser443 and Arg481–Ser491. A compositionally biased stretch (low complexity) spans Ser492–Ser529. A Phosphoserine modification is found at Ser543. Thr569 carries the phosphothreonine modification. The stretch at Ala581–Ser643 forms a coiled coil. Composition is skewed to basic and acidic residues over residues Phe586–Ala613 and Lys621–Tyr637. Positions Ser638–Arg647 are enriched in low complexity. The span at Ser655 to His670 shows a compositional bias: basic residues.

Belongs to the splicing factor SR family. Probably interacts with CLK4. Phosphorylated in vitro by CLK4.

Its subcellular location is the nucleus. Its function is as follows. Probably functions as an alternative splicing regulator. May regulate the mRNA splicing of genes such as CLK1. May act by regulating members of the CLK kinase family. This Bos taurus (Bovine) protein is CLK4-associating serine/arginine rich protein (CLASRP).